The primary structure comprises 268 residues: Tryptophan synthase alpha chain (268 aa).

Active-site proton acceptor residues include Glu-49 and Asp-60.

It belongs to the TrpA family. Tetramer of two alpha and two beta chains.

The enzyme catalyses (1S,2R)-1-C-(indol-3-yl)glycerol 3-phosphate + L-serine = D-glyceraldehyde 3-phosphate + L-tryptophan + H2O. Its pathway is amino-acid biosynthesis; L-tryptophan biosynthesis; L-tryptophan from chorismate: step 5/5. Functionally, the alpha subunit is responsible for the aldol cleavage of indoleglycerol phosphate to indole and glyceraldehyde 3-phosphate. In Haemophilus influenzae (strain PittEE), this protein is Tryptophan synthase alpha chain.